A 957-amino-acid chain; its full sequence is Kinesin heavy chain isoform 5C (957 aa).

Residues 8 to 327 form the Kinesin motor domain; it reads SIKVMCRFRP…LMFGQRAKTI (320 aa). ATP is bound by residues glutamine 87, serine 89, serine 90, glycine 91, lysine 92, threonine 93, histidine 94, and lysine 99. A microtubule-binding region spans residues 174–315; the sequence is VSSPEEVMDV…PSVFNEAETK (142 aa). Positions 406–923 form a coiled coil; that stretch reads VAGISTEEKE…ARRAHSAQIA (518 aa). The globular stretch occupies residues 859–956; sequence RCELPKLEKR…GSSSNSTHYQ (98 aa). The tract at residues 911–957 is disordered; that stretch reads KNMARRAHSAQIAKPIRPGHYPASSPTAVHAIRGGGGSSSNSTHYQK.

This sequence belongs to the TRAFAC class myosin-kinesin ATPase superfamily. Kinesin family. Kinesin subfamily. Oligomer composed of two heavy chains and two light chains. Interacts with GRIP1 and KLC3. Interacts with TRAK1. Interacts with ZFYVE27. As to expression, highest expression in brain, prostate and testis, and moderate expression in kidney, small intestine and ovary.

It localises to the cytoplasm. Its subcellular location is the cytoskeleton. It is found in the cell projection. The protein localises to the dendrite. The enzyme catalyses ATP + H2O = ADP + phosphate + H(+). Microtubule-associated force-producing protein that may play a role in organelle transport. Has ATPase activity. Involved in synaptic transmission. Mediates dendritic trafficking of mRNAs. Required for anterograde axonal transportation of MAPK8IP3/JIP3 which is essential for MAPK8IP3/JIP3 function in axon elongation. This chain is Kinesin heavy chain isoform 5C (KIF5C), found in Homo sapiens (Human).